A 156-amino-acid polypeptide reads, in one-letter code: Ribosomal RNA large subunit methyltransferase H (156 aa).

Residues Gly-104 and 123–128 (LSALTL) each bind S-adenosyl-L-methionine.

This sequence belongs to the RNA methyltransferase RlmH family. As to quaternary structure, homodimer.

It is found in the cytoplasm. The enzyme catalyses pseudouridine(1915) in 23S rRNA + S-adenosyl-L-methionine = N(3)-methylpseudouridine(1915) in 23S rRNA + S-adenosyl-L-homocysteine + H(+). In terms of biological role, specifically methylates the pseudouridine at position 1915 (m3Psi1915) in 23S rRNA. The sequence is that of Ribosomal RNA large subunit methyltransferase H from Nitrosospira multiformis (strain ATCC 25196 / NCIMB 11849 / C 71).